Reading from the N-terminus, the 130-residue chain is Small ribosomal subunit protein uS9 (130 aa).

Belongs to the universal ribosomal protein uS9 family.

The chain is Small ribosomal subunit protein uS9 from Variovorax paradoxus (strain S110).